We begin with the raw amino-acid sequence, 184 residues long: Adenine phosphoribosyltransferase (184 aa).

This sequence belongs to the purine/pyrimidine phosphoribosyltransferase family. Homodimer.

It localises to the cytoplasm. The enzyme catalyses AMP + diphosphate = 5-phospho-alpha-D-ribose 1-diphosphate + adenine. It functions in the pathway purine metabolism; AMP biosynthesis via salvage pathway; AMP from adenine: step 1/1. Catalyzes a salvage reaction resulting in the formation of AMP, that is energically less costly than de novo synthesis. The sequence is that of Adenine phosphoribosyltransferase from Acidovorax sp. (strain JS42).